The following is a 157-amino-acid chain: S-ribosylhomocysteine lyase (157 aa).

Fe cation contacts are provided by His-54, His-58, and Cys-124.

Belongs to the LuxS family. In terms of assembly, homodimer. Fe cation serves as cofactor.

The enzyme catalyses S-(5-deoxy-D-ribos-5-yl)-L-homocysteine = (S)-4,5-dihydroxypentane-2,3-dione + L-homocysteine. Its function is as follows. Involved in the synthesis of autoinducer 2 (AI-2) which is secreted by bacteria and is used to communicate both the cell density and the metabolic potential of the environment. The regulation of gene expression in response to changes in cell density is called quorum sensing. Catalyzes the transformation of S-ribosylhomocysteine (RHC) to homocysteine (HC) and 4,5-dihydroxy-2,3-pentadione (DPD). The sequence is that of S-ribosylhomocysteine lyase from Oenococcus oeni (strain ATCC BAA-331 / PSU-1).